We begin with the raw amino-acid sequence, 399 residues long: Phosphoglycerate kinase (399 aa).

Substrate is bound by residues 22–24 (DLN), Arg-37, 60–63 (HFGR), Arg-119, and Arg-152. Residues Lys-202, Glu-324, and 354-357 (GGDT) each bind ATP.

It belongs to the phosphoglycerate kinase family. As to quaternary structure, monomer.

The protein resides in the cytoplasm. It catalyses the reaction (2R)-3-phosphoglycerate + ATP = (2R)-3-phospho-glyceroyl phosphate + ADP. Its pathway is carbohydrate degradation; glycolysis; pyruvate from D-glyceraldehyde 3-phosphate: step 2/5. The protein is Phosphoglycerate kinase of Sinorhizobium medicae (strain WSM419) (Ensifer medicae).